Consider the following 670-residue polypeptide: DNA ligase (670 aa).

NAD(+) is bound by residues 33 to 37, 82 to 83, and E114; these read DAEYD and SL. The active-site N6-AMP-lysine intermediate is the K116. Positions 137, 173, 291, and 315 each coordinate NAD(+). 4 residues coordinate Zn(2+): C409, C412, C427, and C433. One can recognise a BRCT domain in the interval 592–670; the sequence is VQSDRLSGNT…ENALAELLSD (79 aa).

This sequence belongs to the NAD-dependent DNA ligase family. LigA subfamily. Mg(2+) serves as cofactor. The cofactor is Mn(2+).

It carries out the reaction NAD(+) + (deoxyribonucleotide)n-3'-hydroxyl + 5'-phospho-(deoxyribonucleotide)m = (deoxyribonucleotide)n+m + AMP + beta-nicotinamide D-nucleotide.. In terms of biological role, DNA ligase that catalyzes the formation of phosphodiester linkages between 5'-phosphoryl and 3'-hydroxyl groups in double-stranded DNA using NAD as a coenzyme and as the energy source for the reaction. It is essential for DNA replication and repair of damaged DNA. This chain is DNA ligase, found in Idiomarina loihiensis (strain ATCC BAA-735 / DSM 15497 / L2-TR).